The primary structure comprises 686 residues: Protein-glutamine gamma-glutamyltransferase 2 (686 aa).

At Ala-2 the chain carries N-acetylalanine. 2 disulfide bridges follow: Cys-230–Cys-370 and Cys-370–Cys-371. Residues Cys-277, His-335, and Asp-358 contribute to the active site. Ca(2+) is bound by residues Asn-398, Asp-400, Glu-437, Glu-447, and Glu-452. Position 468 is an N6-acetyllysine (Lys-468). Residue 476-483 (RIRVGDSM) coordinates GTP. Glu-538 contributes to the Ca(2+) binding site. Residue 579–582 (RDLY) participates in GTP binding. An Isoglutamyl lysine isopeptide (Gln-Lys) (interchain with K-?) cross-link involves residue Gln-632.

This sequence belongs to the transglutaminase superfamily. Transglutaminase family. In terms of assembly, monomer. Interacts with phospholipase C; promoting alpha-1 adrenergic receptor signaling. Interacts with PLCD1. Ca(2+) serves as cofactor. In terms of processing, disulfide bond formation inactivates the calcium-dependent acyltransferase activity. Cys-370 can form disulfide bonds with both Cys-230 and Cys-371: formation of a disulfide bond between Cys-230 and Cys-370 facilitates formation of the disulfide between Cys-370 and Cys-371, which promotes inactivation of the acyltransferase activity. May also form interchain disulfids between Cys-230 and Cys-370. Ca(2+) protects against disulfide bond formation and inactivation. Post-translationally, auto-transglutaminated: Forms covalent cross-links mediated by transglutaminase between Gln-632 and the epsilon-amino group of a lysine residue of itself or HMGB1, forming homopolymers and heteropolymers, respectively. S-nitrosylated, leading to inactivation of the acyltransferase activity.

Its subcellular location is the cytoplasm. The protein resides in the cytosol. The protein localises to the nucleus. It localises to the chromosome. It is found in the secreted. Its subcellular location is the extracellular space. The protein resides in the extracellular matrix. The protein localises to the cell membrane. It localises to the mitochondrion. It carries out the reaction L-glutaminyl-[protein] + L-lysyl-[protein] = [protein]-L-lysyl-N(6)-5-L-glutamyl-[protein] + NH4(+). It catalyses the reaction L-glutaminyl-[protein] + serotonin = 5-serotonyl-L-glutamyl-[protein] + NH4(+). The catalysed reaction is L-glutaminyl-[protein] + dopamine = 5-dopaminyl-L-glutamyl-[protein] + NH4(+). The enzyme catalyses L-glutaminyl-[protein] + histamine = 5-histaminyl-L-glutamyl-[protein] + NH4(+). It carries out the reaction L-glutaminyl-[protein] + (R)-noradrenaline = 5-(R)-noradrenalinyl-L-glutamyl-[protein] + NH4(+). It catalyses the reaction L-glutaminyl-[protein] + H2O = L-glutamyl-[protein] + NH4(+). Its activity is regulated as follows. Acyltransferase activity is regulated by the binding of GTP and Ca(2+): inactivated by GTP, which stabilizes its closed structure, thereby obstructing the accessibility of substrates to the active sites. In contrast, Ca(2+) acts as a cofactor by inducing conformational change to the active open form. In absence of Ca(2+), Mg(2+) may bind Ca(2+)-binding sites, promoting GTP-binding and subsequent inhibition of the acyltransferase activity. Extracellularly reduced and activated by CLIC3. Functionally, calcium-dependent acyltransferase that catalyzes the formation of covalent bonds between peptide-bound glutamine and various primary amines, such as gamma-amino group of peptide-bound lysine, or mono- and polyamines, thereby producing cross-linked or aminated proteins, respectively. Involved in many biological processes, such as bone development, angiogenesis, wound healing, cellular differentiation, chromatin modification and apoptosis. Acts as a protein-glutamine gamma-glutamyltransferase by mediating the cross-linking of proteins, such as ACO2, HSPB6, FN1, HMGB1, RAP1GDS1, SLC25A4/ANT1, SPP1 and WDR54. Under physiological conditions, the protein cross-linking activity is inhibited by GTP; inhibition is relieved by Ca(2+) in response to various stresses. When secreted, catalyzes cross-linking of proteins of the extracellular matrix, such as FN1 and SPP1 resulting in the formation of scaffolds. Plays a key role during apoptosis, both by (1) promoting the cross-linking of cytoskeletal proteins resulting in condensation of the cytoplasm, and by (2) mediating cross-linking proteins of the extracellular matrix, resulting in the irreversible formation of scaffolds that stabilize the integrity of the dying cells before their clearance by phagocytosis, thereby preventing the leakage of harmful intracellular components. In addition to protein cross-linking, can use different monoamine substrates to catalyze a vast array of protein post-translational modifications: mediates aminylation of serotonin, dopamine, noradrenaline or histamine into glutamine residues of target proteins to generate protein serotonylation, dopaminylation, noradrenalinylation or histaminylation, respectively. Mediates protein serotonylation of small GTPases during activation and aggregation of platelets, leading to constitutive activation of these GTPases. Plays a key role in chromatin organization by mediating serotonylation and dopaminylation of histone H3. Catalyzes serotonylation of 'Gln-5' of histone H3 (H3Q5ser) during serotonergic neuron differentiation, thereby facilitating transcription. Acts as a mediator of neurotransmission-independent role of nuclear dopamine in ventral tegmental area (VTA) neurons: catalyzes dopaminylation of 'Gln-5' of histone H3 (H3Q5dop), thereby regulating relapse-related transcriptional plasticity in the reward system. Regulates vein remodeling by mediating serotonylation and subsequent inactivation of ATP2A2/SERCA2. Also acts as a protein deamidase by mediating the side chain deamidation of specific glutamine residues of proteins to glutamate. Catalyzes specific deamidation of protein gliadin, a component of wheat gluten in the diet. May also act as an isopeptidase cleaving the previously formed cross-links. Also able to participate in signaling pathways independently of its acyltransferase activity: acts as a signal transducer in alpha-1 adrenergic receptor-mediated stimulation of phospholipase C-delta (PLCD) activity and is required for coupling alpha-1 adrenergic agonists to the stimulation of phosphoinositide lipid metabolism. The sequence is that of Protein-glutamine gamma-glutamyltransferase 2 from Mus musculus (Mouse).